The primary structure comprises 153 residues: Insulin-like growth factor 1 (153 aa).

A b region spans residues 49 to 77; the sequence is GPETLCGAELVDALQFVCGPRGFYFNKPT. Intrachain disulfides connect Cys-54-Cys-96, Cys-66-Cys-109, and Cys-95-Cys-100. A c region spans residues 78–89; sequence GYGSSIRRAPQT. The tract at residues 90-110 is a; it reads GIVDECCFRSCDLRRLEMYCA. Positions 111 to 118 are d; it reads PLKPTKSA. Residues 119–153 constitute a propeptide, e peptide; sequence RSIRAQRHTDMPKTQKEVHLKNTSRGSAGNKTYRM. The interval 119-153 is disordered; sequence RSIRAQRHTDMPKTQKEVHLKNTSRGSAGNKTYRM. Basic and acidic residues predominate over residues 125–138; it reads RHTDMPKTQKEVHL. Positions 139–153 are enriched in polar residues; that stretch reads KNTSRGSAGNKTYRM.

The protein belongs to the insulin family. Forms a ternary complex with IGFR1 and ITGAV:ITGB3. Forms a ternary complex with IGFR1 and ITGA6:ITGB4. Forms a ternary complex with IGFBP3 and ALS.

It is found in the secreted. The insulin-like growth factors, isolated from plasma, are structurally and functionally related to insulin but have a much higher growth-promoting activity. May be a physiological regulator of [1-14C]-2-deoxy-D-glucose (2DG) transport and glycogen synthesis in osteoblasts. Stimulates glucose transport in bone-derived osteoblastic (PyMS) cells and is effective at much lower concentrations than insulin, not only regarding glycogen and DNA synthesis but also with regard to enhancing glucose uptake. May play a role in synapse maturation. Ca(2+)-dependent exocytosis of IGF1 is required for sensory perception of smell in the olfactory bulb. Acts as a ligand for IGF1R. Binds to the alpha subunit of IGF1R, leading to the activation of the intrinsic tyrosine kinase activity which autophosphorylates tyrosine residues in the beta subunit thus initiating a cascade of down-stream signaling events leading to activation of the PI3K-AKT/PKB and the Ras-MAPK pathways. Binds to integrins ITGAV:ITGB3 and ITGA6:ITGB4. Its binding to integrins and subsequent ternary complex formation with integrins and IGFR1 are essential for IGF1 signaling. Induces the phosphorylation and activation of IGFR1, MAPK3/ERK1, MAPK1/ERK2 and AKT1. As part of the MAPK/ERK signaling pathway, acts as a negative regulator of apoptosis in cardiomyocytes via promotion of STUB1/CHIP-mediated ubiquitination and degradation of ICER-type isoforms of CREM. This Rattus norvegicus (Rat) protein is Insulin-like growth factor 1.